The chain runs to 519 residues: Maturase K (519 aa).

Belongs to the intron maturase 2 family. MatK subfamily.

Its subcellular location is the plastid. It is found in the chloroplast. Its function is as follows. Usually encoded in the trnK tRNA gene intron. Probably assists in splicing its own and other chloroplast group II introns. The chain is Maturase K from Cycas panzhihuaensis (Dukou cycad).